The primary structure comprises 328 residues: Phenylalanine--tRNA ligase alpha subunit (328 aa).

Glutamate 245 serves as a coordination point for Mg(2+).

The protein belongs to the class-II aminoacyl-tRNA synthetase family. Phe-tRNA synthetase alpha subunit type 1 subfamily. In terms of assembly, tetramer of two alpha and two beta subunits. Mg(2+) is required as a cofactor.

It is found in the cytoplasm. It catalyses the reaction tRNA(Phe) + L-phenylalanine + ATP = L-phenylalanyl-tRNA(Phe) + AMP + diphosphate + H(+). In Helicobacter acinonychis (strain Sheeba), this protein is Phenylalanine--tRNA ligase alpha subunit.